The sequence spans 268 residues: Cytochrome b-c1 complex subunit Rieske-3, mitochondrial (268 aa).

The transit peptide at 1 to 56 (MLRIAGRKLSSSAATRSSSAFFTRNPFTFTDDSSSPARSPSPASLASQFLDQFRGF) directs the protein to the mitochondrion. The Mitochondrial matrix portion of the chain corresponds to 57–105 (SSNSVSPAHQTGLVSDLPATVAAIKNPSSKIVYDDSNHERYPPGDPSKR). Residues 106–128 (AFAYFVLTGGRFVYASLVRLLIL) traverse the membrane as a helical segment. Topologically, residues 129–268 (KFVLSMSASK…FMEENKLLIG (140 aa)) are mitochondrial intermembrane. The region spanning 178 to 266 (INLANSVDLG…YSFMEENKLL (89 aa)) is the Rieske domain. [2Fe-2S] cluster-binding residues include cysteine 211, histidine 213, cysteine 230, and histidine 233. Cysteine 216 and cysteine 232 are joined by a disulfide.

The protein belongs to the Rieske iron-sulfur protein family. As to quaternary structure, component of the ubiquinol-cytochrome c oxidoreductase (cytochrome b-c1 complex, complex III, CIII), a multisubunit enzyme composed of 3 respiratory subunits cytochrome b, cytochrome c1 and Rieske protein, 2 core protein subunits, and several low-molecular weight protein subunits. The complex exists as an obligatory dimer and forms supercomplexes (SCs) in the inner mitochondrial membrane with cytochrome c oxidase (complex IV, CIV). It depends on [2Fe-2S] cluster as a cofactor. As to expression, high levels are seen in the flowers while a low level expression is seen in the roots, leaves and stems.

Its subcellular location is the mitochondrion inner membrane. The catalysed reaction is a quinol + 2 Fe(III)-[cytochrome c](out) = a quinone + 2 Fe(II)-[cytochrome c](out) + 2 H(+)(out). Functionally, component of the ubiquinol-cytochrome c oxidoreductase, a multisubunit transmembrane complex that is part of the mitochondrial electron transport chain which drives oxidative phosphorylation. The respiratory chain contains 3 multisubunit complexes succinate dehydrogenase (complex II, CII), ubiquinol-cytochrome c oxidoreductase (cytochrome b-c1 complex, complex III, CIII) and cytochrome c oxidase (complex IV, CIV), that cooperate to transfer electrons derived from NADH and succinate to molecular oxygen, creating an electrochemical gradient over the inner membrane that drives transmembrane transport and the ATP synthase. The cytochrome b-c1 complex catalyzes electron transfer from ubiquinol to cytochrome c, linking this redox reaction to translocation of protons across the mitochondrial inner membrane, with protons being carried across the membrane as hydrogens on the quinol. In the process called Q cycle, 2 protons are consumed from the matrix, 4 protons are released into the intermembrane space and 2 electrons are passed to cytochrome c. The Rieske protein is a catalytic core subunit containing a [2Fe-2S] iron-sulfur cluster. It cycles between 2 conformational states during catalysis to transfer electrons from the quinol bound in the Q(0) site in cytochrome b to cytochrome c1. The protein is Cytochrome b-c1 complex subunit Rieske-3, mitochondrial of Nicotiana tabacum (Common tobacco).